The primary structure comprises 253 residues: Transmembrane protein 69 (253 aa).

The next 5 helical transmembrane spans lie at 104–124 (ALYL…LMNV), 137–157 (VAYG…FAIP), 165–185 (DWMN…ALLF), 192–212 (AAVL…ALLP), and 223–243 (AILT…SSVY).

The protein resides in the membrane. This Xenopus tropicalis (Western clawed frog) protein is Transmembrane protein 69 (tmem69).